Consider the following 498-residue polypeptide: ADP,ATP carrier protein 1 (498 aa).

Topologically, residues 1–33 (MSTSKSENYLSELRKIIWPIEQHENKKFLPLAF) are cytoplasmic. The helical transmembrane segment at 34–54 (MMFCILLNYSTLRSIKDGFVV) threads the bilayer. A disulfide bridge links Cys37 with Cys85. Over 55–67 (TDIGTESISFLKT) the chain is Extracellular. A helical transmembrane segment spans residues 68–88 (YIVLPSAVIAMVIYVKLCDIL). Residues 89–92 (KQEN) are Cytoplasmic-facing. The chain crosses the membrane as a helical span at residues 93 to 113 (IFYVITSFFLGYFALFAFVLY). Residues 114–147 (PYPDLVHPDHKTIESLSLAYPNFKWFIKIVGKWS) lie on the Extracellular side of the membrane. The chain crosses the membrane as a helical span at residues 148-168 (FASFYTIAELWGTMMLSLLFW). Topologically, residues 169–184 (QFANQITKITEAKRFY) are cytoplasmic. The chain crosses the membrane as a helical span at residues 185-205 (SMFGLLANLALPVTSVVIGYF). Over 206–218 (LHEKTQIVSEHLK) the chain is Extracellular. Residues 219–239 (FIPLFVIMITSSFLIILTYRW) form a helical membrane-spanning segment. Residues 240–279 (MNKNVLTDPRLYDPTLVKEKKAKAKLSFIESFKMIFTSKY) lie on the Cytoplasmic side of the membrane. A helical transmembrane segment spans residues 280–300 (VGYIALLIIAYGVSVNLVEGV). At 301–320 (WKSKVKELYPTKEAYTIYMG) the chain is on the extracellular side. The helical transmembrane segment at 321–341 (QFQFYQGWVAIAFMLIGSNIL) threads the bilayer. Topologically, residues 342-348 (RKVSWLT) are cytoplasmic. The helical transmembrane segment at 349 to 369 (AAMITPLMMFITGAAFFSFIF) threads the bilayer. Residues 370-379 (FDSVIAMNLT) are Extracellular-facing. Residues 380-400 (GILASSPLTLAVMFGMIQNVL) traverse the membrane as a helical segment. Topologically, residues 401-438 (SKGVKYSLFDATKNMAYIPLDKDLRVKGQAAVEVIGGR) are cytoplasmic. Position 436 to 442 (436 to 442 (GGRLGKS)) interacts with ATP. Residues 439–459 (LGKSGGAIIQSTFFILFPAFG) traverse the membrane as a helical segment. At 460–465 (FIEATP) the chain is on the extracellular side. A helical transmembrane segment spans residues 466-486 (YFASIFFIIVILWIFAVKGLN). Residues 487-498 (KEYQVLVNKNEN) lie on the Cytoplasmic side of the membrane.

This sequence belongs to the ADP/ATP translocase tlc family.

The protein resides in the cell membrane. Functionally, provides the rickettsial cell with host ATP in exchange for rickettsial ADP. This is an obligate exchange system. This energy acquiring activity is an important component of rickettsial parasitism. The polypeptide is ADP,ATP carrier protein 1 (tlcA) (Rickettsia typhi (strain ATCC VR-144 / Wilmington)).